The sequence spans 350 residues: MRSLTIRRPDDWHLHLRDGAMLEGVIGDTSRHFARAIIMPNLVPPVVTTADAEAYRQRILAAVPKGDRFEPLMTLYLTEQTSPDDVEEGKTTGLITAVKLYPAGATTNSHGGVRDLDKAMPVLERMAKIGLPLCVHGEVTTPEVDIFDREAVFIDTVLDPLRRRLPELKVTMEHVTTSDGIDYILSADSNLAGSITTHHLIINRNAILVGGIRPHYYCLPVAKRESHRLALRRAATSGDSRFFLGTDSAPHVDPLKECGCGCAGIYTSINTMSCLAHVFEEDEALERLEAFVSLNGPAWYGLQPNDEMITLVRRDAPVAFPAKIETGAGPVTVFDPMFPIHWDVEAAIQA.

2 residues coordinate Zn(2+): His-13 and His-15. Residues 15-17 (HLR) and Asn-41 each bind substrate. The Zn(2+) site is built by Lys-99, His-136, and His-174. Lys-99 is subject to N6-carboxylysine. His-136 lines the substrate pocket. Leu-219 lines the substrate pocket. A Zn(2+)-binding site is contributed by Asp-247. Asp-247 is an active-site residue. The substrate site is built by His-251 and Ala-263.

The protein belongs to the metallo-dependent hydrolases superfamily. DHOase family. Class II DHOase subfamily. In terms of assembly, homodimer. It depends on Zn(2+) as a cofactor.

The enzyme catalyses (S)-dihydroorotate + H2O = N-carbamoyl-L-aspartate + H(+). It functions in the pathway pyrimidine metabolism; UMP biosynthesis via de novo pathway; (S)-dihydroorotate from bicarbonate: step 3/3. Catalyzes the reversible cyclization of carbamoyl aspartate to dihydroorotate. The sequence is that of Dihydroorotase from Allorhizobium ampelinum (strain ATCC BAA-846 / DSM 112012 / S4) (Agrobacterium vitis (strain S4)).